Here is a 645-residue protein sequence, read N- to C-terminus: UvrABC system protein C (645 aa).

Residues 1-20 form a disordered region; it reads MTDLPPHSSHHPADQGEPLV. Residues 40 to 118 enclose the GIY-YIG domain; that stretch reads YSPGVYRMLS…IKRMKPRFNI (79 aa). The UVR domain occupies 228–263; it reads TELQQRLVAEMEQASQELNYERAASIRDRIRGFASI.

It belongs to the UvrC family. In terms of assembly, interacts with UvrB in an incision complex.

The protein localises to the cytoplasm. Functionally, the UvrABC repair system catalyzes the recognition and processing of DNA lesions. UvrC both incises the 5' and 3' sides of the lesion. The N-terminal half is responsible for the 3' incision and the C-terminal half is responsible for the 5' incision. This chain is UvrABC system protein C, found in Gluconobacter oxydans (strain 621H) (Gluconobacter suboxydans).